A 622-amino-acid chain; its full sequence is Phosphomethylpyrimidine synthase (622 aa).

Substrate is bound by residues asparagine 226, methionine 255, tyrosine 284, histidine 320, 340–342 (SRG), 381–384 (DGLR), and glutamate 420. Position 424 (histidine 424) interacts with Zn(2+). Position 447 (tyrosine 447) interacts with substrate. Histidine 488 provides a ligand contact to Zn(2+). Positions 568, 571, and 576 each coordinate [4Fe-4S] cluster.

The protein belongs to the ThiC family. In terms of assembly, homodimer. The cofactor is [4Fe-4S] cluster.

It catalyses the reaction 5-amino-1-(5-phospho-beta-D-ribosyl)imidazole + S-adenosyl-L-methionine = 4-amino-2-methyl-5-(phosphooxymethyl)pyrimidine + CO + 5'-deoxyadenosine + formate + L-methionine + 3 H(+). The protein operates within cofactor biosynthesis; thiamine diphosphate biosynthesis. In terms of biological role, catalyzes the synthesis of the hydroxymethylpyrimidine phosphate (HMP-P) moiety of thiamine from aminoimidazole ribotide (AIR) in a radical S-adenosyl-L-methionine (SAM)-dependent reaction. The sequence is that of Phosphomethylpyrimidine synthase from Ruthia magnifica subsp. Calyptogena magnifica.